Reading from the N-terminus, the 436-residue chain is Transcriptional regulator STP3 (436 aa).

The tract at residues glutamate 204 to glutamine 277 is disordered. The segment covering isoleucine 230–serine 265 has biased composition (low complexity). Over residues threonine 268–glutamine 277 the composition is skewed to basic residues. A C2H2-type zinc finger spans residues phenylalanine 315–histidine 337.

Activated by the amino acid-induced proteolytic removal of an N-terminal inhibitory domain.

The protein localises to the cell membrane. Its subcellular location is the nucleus. In terms of biological role, transcription factor that activates genes required for degradation of extracellular protein and uptake of peptides such as the secreted aspartyl protease SAP2 or the oligopeptide transporter OPT1. Required for virulence. Synthesized as latent cytoplasmic precursor, which, upon a signal initiated by the plasma membrane SPS amino acid sensor system (including CSY1 and CSH3), becomes proteolytically activated and relocates to the nucleus, where it induces the expression of SPS-sensor-regulated genes. The protein is Transcriptional regulator STP3 (STP3) of Candida albicans (strain SC5314 / ATCC MYA-2876) (Yeast).